A 293-amino-acid chain; its full sequence is Elongation factor Ts (293 aa).

Residues 80–83 (TDFV) form an involved in Mg(2+) ion dislocation from EF-Tu region.

It belongs to the EF-Ts family.

The protein resides in the cytoplasm. In terms of biological role, associates with the EF-Tu.GDP complex and induces the exchange of GDP to GTP. It remains bound to the aminoacyl-tRNA.EF-Tu.GTP complex up to the GTP hydrolysis stage on the ribosome. The protein is Elongation factor Ts of Burkholderia pseudomallei (strain 1106a).